Here is a 1350-residue protein sequence, read N- to C-terminus: Nidogen (1350 aa).

A signal peptide spans 1–22 (MPTFGSKLLACLLLSSVILVSG). One can recognise an NIDO domain in the interval 107 to 260 (AFYSNVDTSF…GVWLFEVAPI (154 aa)). Asparagine 231 carries an N-linked (GlcNAc...) asparagine glycan. The EGF-like 1 domain occupies 281-321 (LALSCQAHAHQCHEKAECHDKAEGYCCVCGSGFYGNGKSCL). Intrachain disulfides connect cysteine 285/cysteine 298, cysteine 292/cysteine 307, and cysteine 309/cysteine 320. The 226-residue stretch at 325 to 550 (QPIRVTGTLT…GVTPESNACN (226 aa)) folds into the Nidogen G2 beta-barrel domain. Asparagine 423 and asparagine 480 each carry an N-linked (GlcNAc...) asparagine glycan. The EGF-like 2 domain maps to 545–583 (ESNACNDGTADCVENSVCVPYEDTYRCDCYHGFAAQLDE). Disulfide bonds link cysteine 549–cysteine 562, cysteine 556–cysteine 571, cysteine 595–cysteine 608, cysteine 602–cysteine 617, and cysteine 619–cysteine 630. The 41-residue stretch at 591 to 631 (DIDECATGSHVCDENAVCDNTEGGFNCYCTEGFEGNGYRCL) folds into the EGF-like 3; calcium-binding domain. Asparagine 633 carries an N-linked (GlcNAc...) asparagine glycan. The tract at residues 645-691 (VEGQAEPTSEPSPNPSPYPDQGQDQEREREDDQYPQPNPYPYPEEQI) is disordered. EGF-like domains lie at 788-829 (DLIP…YNCD), 832-874 (SDDS…FNCQ), 912-953 (PAGR…TGCT), 955-996 (KPLS…YVCI), and 997-1037 (EEQN…SLCQ). Cystine bridges form between cysteine 792/cysteine 804, cysteine 798/cysteine 815, cysteine 817/cysteine 828, cysteine 836/cysteine 849, cysteine 843/cysteine 860, cysteine 862/cysteine 873, cysteine 916/cysteine 927, cysteine 921/cysteine 938, cysteine 940/cysteine 952, cysteine 959/cysteine 971, cysteine 965/cysteine 982, cysteine 984/cysteine 995, cysteine 1001/cysteine 1014, cysteine 1008/cysteine 1023, and cysteine 1025/cysteine 1036. Asparagine 801 is a glycosylation site (N-linked (GlcNAc...) asparagine). Residue asparagine 1032 is glycosylated (N-linked (GlcNAc...) asparagine). LDL-receptor class B repeat units lie at residues 1084-1126 (GRVY…DVIS), 1127-1170 (RRLY…DPYR), 1171-1216 (EKLF…LENS), and 1257-1282 (DQFYWTDWTTKKVEIVDSLGARQTPI).

In terms of tissue distribution, expressed in the basement membrane around the follicular epithelium of the adult ovary (at protein level).

It localises to the secreted. The protein localises to the extracellular space. The protein resides in the extracellular matrix. Its subcellular location is the basement membrane. In terms of biological role, cell adhesion glycoprotein which is widely distributed in basement membranes. Involved in cell-extracellular matrix (ECM) interactions probably by connecting the laminin and collagen IV networks. Required for permeability and mechanical stability of basement membranes, and ECM dependent neural plasticity. Not involved in assembly of the embryonic basement membrane. In Drosophila melanogaster (Fruit fly), this protein is Nidogen.